The sequence spans 349 residues: Phosphoribosylformylglycinamidine cyclo-ligase (349 aa).

It belongs to the AIR synthase family.

Its subcellular location is the cytoplasm. It carries out the reaction 2-formamido-N(1)-(5-O-phospho-beta-D-ribosyl)acetamidine + ATP = 5-amino-1-(5-phospho-beta-D-ribosyl)imidazole + ADP + phosphate + H(+). It functions in the pathway purine metabolism; IMP biosynthesis via de novo pathway; 5-amino-1-(5-phospho-D-ribosyl)imidazole from N(2)-formyl-N(1)-(5-phospho-D-ribosyl)glycinamide: step 2/2. In Listeria monocytogenes serovar 1/2a (strain ATCC BAA-679 / EGD-e), this protein is Phosphoribosylformylglycinamidine cyclo-ligase.